Reading from the N-terminus, the 292-residue chain is NAC domain-containing protein 105 (292 aa).

Residues I12 to K162 form the NAC domain. Residues I112 to T168 mediate DNA binding. Positions L237–N259 are enriched in polar residues. The segment at L237–E269 is disordered. The segment covering S260–E269 has biased composition (basic and acidic residues).

Belongs to the plant vascular related NAC-domain protein family. Interacts with NAC030/VND7. In terms of tissue distribution, detected in root protoxylem and metaxylem poles and in vessels of protoxylems, outermost metaxylems, inner metaxylems, shoots and hypocotyls. Expressed in roots, hypocotyls, cotyledons and leaves. Present in developing xylems. Present in root developing xylems. Specifically expressed in vessels but not in interfascicular fibers in stems.

The protein resides in the nucleus. In terms of biological role, transcription activator that binds to the secondary wall NAC binding element (SNBE), 5'-(T/A)NN(C/T)(T/C/G)TNNNNNNNA(A/C)GN(A/C/T)(A/T)-3', in the promoter of target genes. Involved in xylem formation by promoting the expression of secondary wall-associated transcription factors and of genes involved in secondary wall biosynthesis and programmed cell death, genes driven by the secondary wall NAC binding element (SNBE). Triggers thickening of secondary walls. This Arabidopsis thaliana (Mouse-ear cress) protein is NAC domain-containing protein 105.